A 481-amino-acid polypeptide reads, in one-letter code: GTPase Der (481 aa).

2 consecutive EngA-type G domains span residues 47–210 and 221–394; these read PVLA…PDVS and RRVA…ESWE. Residues 53 to 60, 100 to 104, 162 to 165, 227 to 234, 274 to 278, and 339 to 342 contribute to the GTP site; these read GRPNVGKS, DTGGW, NKVD, DTAGI, and NKWD. The KH-like domain occupies 395–477; the sequence is TRIPTGKFNA…PIVLNMRVRE (83 aa).

Belongs to the TRAFAC class TrmE-Era-EngA-EngB-Septin-like GTPase superfamily. EngA (Der) GTPase family. As to quaternary structure, associates with the 50S ribosomal subunit.

In terms of biological role, GTPase that plays an essential role in the late steps of ribosome biogenesis. The protein is GTPase Der of Leifsonia xyli subsp. xyli (strain CTCB07).